The chain runs to 445 residues: Gamma-glutamyl phosphate reductase (445 aa).

Belongs to the gamma-glutamyl phosphate reductase family.

It localises to the cytoplasm. The enzyme catalyses L-glutamate 5-semialdehyde + phosphate + NADP(+) = L-glutamyl 5-phosphate + NADPH + H(+). It functions in the pathway amino-acid biosynthesis; L-proline biosynthesis; L-glutamate 5-semialdehyde from L-glutamate: step 2/2. Its function is as follows. Catalyzes the NADPH-dependent reduction of L-glutamate 5-phosphate into L-glutamate 5-semialdehyde and phosphate. The product spontaneously undergoes cyclization to form 1-pyrroline-5-carboxylate. This chain is Gamma-glutamyl phosphate reductase, found in Synechococcus sp. (strain RCC307).